The following is a 428-amino-acid chain: Homocitrate synthase, cytosolic isozyme (428 aa).

A Pyruvate carboxyltransferase domain is found at Phe-23–Arg-276. 2-oxoglutarate is bound at residue Arg-31. A Mg(2+)-binding site is contributed by Glu-32. Residues His-91, Arg-151, and Thr-185 each contribute to the 2-oxoglutarate site. Residues His-212 and His-214 each contribute to the Mg(2+) site. Catalysis depends on His-309, which acts as the Proton acceptor. At Ser-385 the chain carries Phosphoserine. Thr-396 carries the post-translational modification Phosphothreonine. The segment at Val-399–Ala-428 is disordered. 2 positions are modified to phosphoserine: Ser-401 and Ser-410.

It belongs to the alpha-IPM synthase/homocitrate synthase family. Homocitrate synthase LYS20/LYS21 subfamily. Mg(2+) is required as a cofactor. Mn(2+) serves as cofactor.

The protein localises to the cytoplasm. It catalyses the reaction acetyl-CoA + 2-oxoglutarate + H2O = (2R)-homocitrate + CoA + H(+). The protein operates within amino-acid biosynthesis; L-lysine biosynthesis via AAA pathway; L-alpha-aminoadipate from 2-oxoglutarate: step 1/5. Functionally, catalyzes the aldol-type condensation of 2-oxoglutarate with acetyl-CoA to yield homocitrate. Carries out the first step of the alpha-aminoadipate (AAA) lysine biosynthesis pathway. This Saccharomyces cerevisiae (strain ATCC 204508 / S288c) (Baker's yeast) protein is Homocitrate synthase, cytosolic isozyme (LYS20).